An 838-amino-acid chain; its full sequence is Protein translocase subunit SecA 1 (838 aa).

ATP-binding positions include glutamine 85, 103–107, and aspartate 493; that span reads GEGKT. Residues cysteine 823, cysteine 825, cysteine 834, and histidine 835 each contribute to the Zn(2+) site.

The protein belongs to the SecA family. In terms of assembly, monomer and homodimer. Part of the essential Sec protein translocation apparatus which comprises SecA, SecYEG and auxiliary proteins SecDF. Other proteins may also be involved. The cofactor is Zn(2+).

It is found in the cell membrane. Its subcellular location is the cytoplasm. It carries out the reaction ATP + H2O + cellular proteinSide 1 = ADP + phosphate + cellular proteinSide 2.. Part of the Sec protein translocase complex. Interacts with the SecYEG preprotein conducting channel. Has a central role in coupling the hydrolysis of ATP to the transfer of proteins into and across the cell membrane, serving as an ATP-driven molecular motor driving the stepwise translocation of polypeptide chains across the membrane. This chain is Protein translocase subunit SecA 1, found in Streptococcus gordonii.